The primary structure comprises 569 residues: 4-coumarate-CoA ligase 2 (569 aa).

Residues 1–24 (MITIAESHPQIHHSPPDTTAPSTP) form a disordered region. Residues 216–220 (SSGTT), His-265, 337–339 (AAP), 359–360 (QG), Thr-364, Asp-448, Arg-463, and Lys-554 each bind ATP. An SBD1 region spans residues 290–359 (EMEGMLETIQ…GRLPQAVLGQ (70 aa)). The segment at 360-427 (GYGMTEAGPV…VRGPQIMKGY (68 aa)) is SBD2.

The protein belongs to the ATP-dependent AMP-binding enzyme family. In terms of tissue distribution, mostly expressed in stems, and, to a lower extent, in bulbs.

It carries out the reaction (E)-4-coumarate + ATP + CoA = (E)-4-coumaroyl-CoA + AMP + diphosphate. It functions in the pathway phytoalexin biosynthesis; 3,4',5-trihydroxystilbene biosynthesis; 3,4',5-trihydroxystilbene from trans-4-coumarate: step 1/2. Produces CoA thioesters of a variety of hydroxy- and methoxy-substituted cinnamic acids, which are used to synthesize several phenylpropanoid-derived compounds, including anthocyanins, flavonoids, isoflavonoids, coumarins, lignin, suberin and wall-bound phenolics. The polypeptide is 4-coumarate-CoA ligase 2 (Narcissus pseudonarcissus (Daffodil)).